A 263-amino-acid chain; its full sequence is Putative hydro-lyase Psyc_1103 (263 aa).

It belongs to the D-glutamate cyclase family.

This Psychrobacter arcticus (strain DSM 17307 / VKM B-2377 / 273-4) protein is Putative hydro-lyase Psyc_1103.